The sequence spans 642 residues: 1-deoxy-D-xylulose-5-phosphate synthase (642 aa).

Thiamine diphosphate-binding positions include histidine 79 and 120-122 (AHS). Aspartate 151 serves as a coordination point for Mg(2+). Residues 152–153 (GS), asparagine 180, tyrosine 290, and glutamate 372 each bind thiamine diphosphate. Residue asparagine 180 participates in Mg(2+) binding.

This sequence belongs to the transketolase family. DXPS subfamily. In terms of assembly, homodimer. Mg(2+) serves as cofactor. It depends on thiamine diphosphate as a cofactor.

The catalysed reaction is D-glyceraldehyde 3-phosphate + pyruvate + H(+) = 1-deoxy-D-xylulose 5-phosphate + CO2. It functions in the pathway metabolic intermediate biosynthesis; 1-deoxy-D-xylulose 5-phosphate biosynthesis; 1-deoxy-D-xylulose 5-phosphate from D-glyceraldehyde 3-phosphate and pyruvate: step 1/1. In terms of biological role, catalyzes the acyloin condensation reaction between C atoms 2 and 3 of pyruvate and glyceraldehyde 3-phosphate to yield 1-deoxy-D-xylulose-5-phosphate (DXP). This is 1-deoxy-D-xylulose-5-phosphate synthase from Beijerinckia indica subsp. indica (strain ATCC 9039 / DSM 1715 / NCIMB 8712).